Reading from the N-terminus, the 116-residue chain is UPF0298 protein EF_2453 (116 aa).

It belongs to the UPF0298 family.

The protein localises to the cytoplasm. This is UPF0298 protein EF_2453 from Enterococcus faecalis (strain ATCC 700802 / V583).